The chain runs to 637 residues: Chaperone protein HtpG (637 aa).

The segment at 1–345 (MSQQETHGFQ…SNDLPLNVSR (345 aa)) is a; substrate-binding. The segment at 346-562 (EILQDNHITK…EGEMSTQMIK (217 aa)) is b. A c region spans residues 563-637 (LMQAAGQPVP…MNQMLLANMK (75 aa)).

This sequence belongs to the heat shock protein 90 family. As to quaternary structure, homodimer.

Its subcellular location is the cytoplasm. Molecular chaperone. Has ATPase activity. The chain is Chaperone protein HtpG from Shewanella sp. (strain W3-18-1).